Here is a 156-residue protein sequence, read N- to C-terminus: Small ribosomal subunit protein uS7 (156 aa).

Belongs to the universal ribosomal protein uS7 family. Part of the 30S ribosomal subunit. Contacts proteins S9 and S11.

Functionally, one of the primary rRNA binding proteins, it binds directly to 16S rRNA where it nucleates assembly of the head domain of the 30S subunit. Is located at the subunit interface close to the decoding center, probably blocks exit of the E-site tRNA. The sequence is that of Small ribosomal subunit protein uS7 from Gemmatimonas aurantiaca (strain DSM 14586 / JCM 11422 / NBRC 100505 / T-27).